The primary structure comprises 257 residues: uncharacterized protein (257 aa).

Residues 6-26 form a helical membrane-spanning segment; sequence IFWLNLAAIIIISIVVSGDMF.

This sequence belongs to the staphylococcal tandem lipoprotein family.

Its subcellular location is the cell membrane. This is an uncharacterized protein from Staphylococcus aureus (strain NCTC 8325 / PS 47).